A 379-amino-acid polypeptide reads, in one-letter code: Armadillo repeat-containing X-linked protein 3 (379 aa).

Residues 1–6 (MGYARK) are Mitochondrial intermembrane-facing. Mitochondrion outer membrane (MOM)-targeting sequence stretches follow at residues 1 to 6 (MGYARK) and 26 to 37 (RLTRGRKQNKEK). The helical; Signal-anchor transmembrane segment at 7–29 (VGWVTAGLVIGAGACYCIYRLTR) threads the bilayer. At 30–379 (GRKQNKEKMA…AEHMFPKSQE (350 aa)) the chain is on the cytoplasmic side. A phosphoserine mark is found at Ser61, Ser67, and Ser72. The segment at 89 to 98 (RARARARARA) is nuclear localization signal. Residue Ser110 is modified to Phosphoserine. ARM repeat units lie at residues 111–151 (PNSD…NNAA), 153–192 (AFNR…NLSV), and 233–272 (VTNE…NLAE).

The protein belongs to the eutherian X-chromosome-specific Armcx family. In terms of assembly, interacts (via ARM domain) with MIRO1, MIRO2 and TRAK2. The interaction with Miro is calcium-dependent. Interacts with SOX10.

The protein localises to the mitochondrion outer membrane. It localises to the cytoplasm. It is found in the nucleus. Functionally, regulates mitochondrial aggregation and transport in axons in living neurons. May link mitochondria to the TRAK2-kinesin motor complex via its interaction with Miro and TRAK2. Mitochondrial distribution and dynamics is regulated through ARMCX3 protein degradation, which is promoted by PCK and negatively regulated by WNT1. Enhances the SOX10-mediated transactivation of the neuronal acetylcholine receptor subunit alpha-3 and beta-4 subunit gene promoters. The polypeptide is Armadillo repeat-containing X-linked protein 3 (ARMCX3) (Pongo abelii (Sumatran orangutan)).